Consider the following 57-residue polypeptide: MSAKCPICAKPVDSAFRPFCSKRCADVDLQRWLSGRYVVAGGDDDEENPPSQDINRE.

Positions 5, 8, 20, and 24 each coordinate Zn(2+).

Belongs to the DNA gyrase inhibitor YacG family. As to quaternary structure, interacts with GyrB. The cofactor is Zn(2+).

In terms of biological role, inhibits all the catalytic activities of DNA gyrase by preventing its interaction with DNA. Acts by binding directly to the C-terminal domain of GyrB, which probably disrupts DNA binding by the gyrase. This Caulobacter vibrioides (strain ATCC 19089 / CIP 103742 / CB 15) (Caulobacter crescentus) protein is DNA gyrase inhibitor YacG.